The sequence spans 402 residues: Putative F-box protein At1g70970 (402 aa).

The F-box domain maps to 4–52 (SSSETLHVEDLQTEIMSWLPLKSLLRFVIVSKKWASIIRGEQFKALYLR).

The protein is Putative F-box protein At1g70970 of Arabidopsis thaliana (Mouse-ear cress).